Here is a 343-residue protein sequence, read N- to C-terminus: Flavone 3'-O-methyltransferase OMT1 (343 aa).

(E)-ferulate is bound at residue asparagine 107. S-adenosyl-L-homocysteine contacts are provided by glycine 184, aspartate 207, aspartate 227, methionine 228, methionine 240, and lysine 241. The active-site Proton acceptor is the histidine 245. Aspartate 246 contacts (E)-5-hydroxyferulate. Residues glutamate 273 and glutamate 305 contribute to the active site.

Belongs to the class I-like SAM-binding methyltransferase superfamily. Cation-independent O-methyltransferase family. COMT subfamily. In terms of assembly, homodimer.

It carries out the reaction (E)-5-hydroxyferulate + S-adenosyl-L-methionine = (E)-sinapate + S-adenosyl-L-homocysteine + H(+). The catalysed reaction is luteolin + S-adenosyl-L-methionine = chrysoeriol + S-adenosyl-L-homocysteine + H(+). It catalyses the reaction quercetin + S-adenosyl-L-methionine = isorhamnetin + S-adenosyl-L-homocysteine + H(+). The enzyme catalyses (E)-caffeate + S-adenosyl-L-methionine = (E)-ferulate + S-adenosyl-L-homocysteine + H(+). It carries out the reaction a 3'-hydroxyflavone + S-adenosyl-L-methionine = a 3'-methoxyflavone + S-adenosyl-L-homocysteine + H(+). The protein operates within flavonoid metabolism. In terms of biological role, catalyzes the 3'-O-methylation of the flavonoids luteolin and quercetin. Catalyzes the 3- of 5-O-methylation of the phenylpropanoids caffeate and 5-hydroxyferulate. Substrate preference is 5-hydroxyferulate &gt; luteolin &gt; quercetin &gt; caffeate. Apigenin, kempferol and 3,4-dimethylquercetin do not seem to be substrates for methylation. The chain is Flavone 3'-O-methyltransferase OMT1 from Chrysosplenium americanum (American golden saxifrage).